An 85-amino-acid chain; its full sequence is Toxin Cll5c* (85 aa).

Residues 1–17 form the signal peptide; the sequence is MNSLLIITACLVLFVWA. Residues 18-83 enclose the LCN-type CS-alpha/beta domain; that stretch reads KEGYLVNKST…TYPLPNKSCS (66 aa). 4 cysteine pairs are disulfide-bonded: cysteine 29/cysteine 82, cysteine 33/cysteine 58, cysteine 42/cysteine 63, and cysteine 46/cysteine 65. The propeptide at 84–85 is removed by a carboxypeptidase; the sequence is KK.

It belongs to the long (4 C-C) scorpion toxin superfamily. Sodium channel inhibitor family. Beta subfamily. As to expression, expressed by the venom gland.

The protein resides in the secreted. In terms of biological role, beta toxins bind voltage-independently at site-4 of sodium channels (Nav) and shift the voltage of activation toward more negative potentials thereby affecting sodium channel activation and promoting spontaneous and repetitive firing. In Centruroides limpidus (Mexican scorpion), this protein is Toxin Cll5c*.